We begin with the raw amino-acid sequence, 245 residues long: Eukaryotic translation initiation factor 6 (245 aa).

Phosphotyrosine is present on Tyr113. The residue at position 165 (Thr165) is a Phosphothreonine. Ser166 carries the phosphoserine modification. Phosphoserine; by CK1 is present on residues Ser174 and Ser175. The residue at position 235 (Ser235) is a Phosphoserine; by PKC. Phosphoserine is present on residues Ser239 and Ser243.

It belongs to the eIF-6 family. Monomer. Associates with the 60S ribosomal subunit. Interacts with RACK1. Interacts with DICER1, AGO2, TARBP2, MOV10 and RPL7A; they form a large RNA-induced silencing complex (RISC). Phosphorylation at Ser-174 and Ser-175 by CSNK1D/CK1 promotes nuclear export. In terms of processing, ufmylated by UFL1.

It is found in the cytoplasm. It localises to the nucleus. Its subcellular location is the nucleolus. Binds to the 60S ribosomal subunit and prevents its association with the 40S ribosomal subunit to form the 80S initiation complex in the cytoplasm. Behaves as a stimulatory translation initiation factor downstream insulin/growth factors. Is also involved in ribosome biogenesis. Associates with pre-60S subunits in the nucleus and is involved in its nuclear export. Cytoplasmic release of TIF6 from 60S subunits and nuclear relocalization is promoted by a RACK1 (RACK1)-dependent protein kinase C activity. In tissues responsive to insulin, controls fatty acid synthesis and glycolysis by exerting translational control of adipogenic transcription factors such as CEBPB, CEBPD and ATF4 that have G/C rich or uORF in their 5'UTR. Required for ROS-dependent megakaryocyte maturation and platelets formation, controls the expression of mitochondrial respiratory chain genes involved in reactive oxygen species (ROS) synthesis. Involved in miRNA-mediated gene silencing by the RNA-induced silencing complex (RISC). Required for both miRNA-mediated translational repression and miRNA-mediated cleavage of complementary mRNAs by RISC. Modulates cell cycle progression and global translation of pre-B cells, its activation seems to be rate-limiting in tumorigenesis and tumor growth. The sequence is that of Eukaryotic translation initiation factor 6 (Eif6) from Rattus norvegicus (Rat).